Reading from the N-terminus, the 280-residue chain is Late embryogenesis abundant protein 76 (280 aa).

Disordered stretches follow at residues 1 to 156 (MASN…GEAV) and 220 to 241 (EEEDREHYPGTTTCTTQSTDPT). The segment covering 28–39 (MRDKAEEGKDKT) has biased composition (basic and acidic residues). LEA 11-mer repeat repeat units follow at residues 31-41 (KAEEGKDKTSQ), 53-63 (TAQAAKDKTSQ), 75-85 (TAQAAKDKTSQ), 97-107 (TAQAAKDKTSQ), and 119-129 (TTQSSKEKTSQ). Residues 40 to 114 (SQTAQKAQQK…TSQAAQTTQQ (75 aa)) are compositionally biased toward low complexity. 2 stretches are compositionally biased toward basic and acidic residues: residues 115–127 (KAHETTQSSKEKT) and 136–145 (EKARETKDKT). Positions 230 to 239 (TTTCTTQSTD) are enriched in low complexity.

Belongs to the LEA type 4 family.

Its function is as follows. Lea proteins are late embryonic proteins abundant in higher plant seed embryos. This Brassica napus (Rape) protein is Late embryogenesis abundant protein 76.